A 96-amino-acid polypeptide reads, in one-letter code: Prokineticin Bm8-d (96 aa).

An N-terminal signal peptide occupies residues 1–19; sequence MKCFAQIVVLLLVIAFSHG. 5 cysteine pairs are disulfide-bonded: cysteine 26–cysteine 38, cysteine 32–cysteine 50, cysteine 37–cysteine 78, cysteine 60–cysteine 86, and cysteine 80–cysteine 95.

This sequence belongs to the AVIT (prokineticin) family. As to expression, expressed by the skin glands.

Its subcellular location is the secreted. Potent agonist for both PKR1/PROKR1 and PKR2/PROKR2, and inducer of a potent and long-lasting hyperalgesia. Also potentiates capsaicin-induced TRPV1 current, when tested on DRG neurons. At subnanomolar concentrations, this protein both induces potent chemotaxis of macrophages and stimulates LPS-induced production of the pro-inflammatory cytokines IL-1 and IL-12. In vivo, potently stimulates the contraction of the guinea-pig gastrointestinal (GI) smooth muscle (nanomolar concentration). The polypeptide is Prokineticin Bm8-d (Bombina maxima (Giant fire-bellied toad)).